A 144-amino-acid chain; its full sequence is Small ribosomal subunit protein bS6 (144 aa).

The disordered stretch occupies residues 99 to 144 (KASPLAPCEEKGEEGKAEDAADELTTFGMADDDDLGDDDDTVEAGI). Basic and acidic residues predominate over residues 106–117 (CEEKGEEGKAED). Residues 128-144 (ADDDDLGDDDDTVEAGI) are compositionally biased toward acidic residues.

It belongs to the bacterial ribosomal protein bS6 family.

Its function is as follows. Binds together with bS18 to 16S ribosomal RNA. This chain is Small ribosomal subunit protein bS6, found in Magnetococcus marinus (strain ATCC BAA-1437 / JCM 17883 / MC-1).